A 261-amino-acid chain; its full sequence is Thiamine thiazole synthase (261 aa).

Residues serine 40, 59–60, glycine 67, valine 133, and 159–161 contribute to the NAD(+) site; these read ER and HVD. Fe cation contacts are provided by aspartate 161 and histidine 176. NAD(+)-binding residues include serine 179 and methionine 226. Arginine 236 is a glycine binding site.

The protein belongs to the THI4 family. As to quaternary structure, homooctamer; tetramer of dimers. Fe(2+) is required as a cofactor.

The enzyme catalyses hydrogen sulfide + glycine + NAD(+) = ADP-5-ethyl-4-methylthiazole-2-carboxylate + nicotinamide + 3 H2O + H(+). It functions in the pathway cofactor biosynthesis; thiamine diphosphate biosynthesis. Its function is as follows. Involved in the biosynthesis of the thiazole moiety of thiamine. Catalyzes the conversion of NAD and glycine to adenosine diphosphate 5-(2-hydroxyethyl)-4-methylthiazole-2-carboxylate (ADT), an adenylated thiazole intermediate, using free sulfide as a source of sulfur. The protein is Thiamine thiazole synthase of Methanococcus vannielii (strain ATCC 35089 / DSM 1224 / JCM 13029 / OCM 148 / SB).